Consider the following 967-residue polypeptide: Kinesin heavy chain (967 aa).

Positions 8–326 constitute a Kinesin motor domain; it reads NIKVICRVRP…LLFGQRAKTI (319 aa). ATP is bound at residue 85–92; sequence GQTSSGKT. The interval 173 to 314 is microtubule-binding; it reads VSSPEEVMEV…PASYNESETK (142 aa). Disordered stretches follow at residues 387-411 and 923-967; these read VPAE…NEGD and KPIR…ESKA. Residues 392–861 adopt a coiled-coil conformation; sequence PATSTTSLAG…RDNADLRCEL (470 aa). A globular region spans residues 862–967; that stretch reads PKLEKRLRAT…PIRMAPESKA (106 aa). Residues 949–958 are compositionally biased toward polar residues; that stretch reads QNGPMITSTP.

It belongs to the TRAFAC class myosin-kinesin ATPase superfamily. Kinesin family. Kinesin subfamily. Oligomer composed of two heavy chains and two light chains. Interacts with amyloid-beta precursor-like protein (via cytoplasmic domain).

The protein localises to the cytoplasm. It localises to the cytoskeleton. The protein resides in the cell projection. Its subcellular location is the axon. Its function is as follows. Kinesin is a microtubule-associated force-producing protein that may play a role in organelle transport. This chain is Kinesin heavy chain, found in Doryteuthis pealeii (Longfin inshore squid).